The following is a 241-amino-acid chain: Tetrahydromethanopterin S-methyltransferase subunit A (241 aa).

Residues Met-1–Gly-220 lie on the Cytoplasmic side of the membrane. Residue His-85 participates in 5-hydroxybenzimidazolylcob(I)amide binding. A helical membrane pass occupies residues Lys-221 to Phe-241.

The protein belongs to the MtrA family. In terms of assembly, the complex is composed of 8 subunits; MtrA, MtrB, MtrC, MtrD, MtrE, MtrF, MtrG and MtrH. It depends on 5-hydroxybenzimidazolylcob(I)amide as a cofactor.

Its subcellular location is the cell membrane. It carries out the reaction 5-methyl-5,6,7,8-tetrahydromethanopterin + coenzyme M + 2 Na(+)(in) = 5,6,7,8-tetrahydromethanopterin + methyl-coenzyme M + 2 Na(+)(out). Its pathway is one-carbon metabolism; methanogenesis from CO(2); methyl-coenzyme M from 5,10-methylene-5,6,7,8-tetrahydromethanopterin: step 2/2. Functionally, part of a complex that catalyzes the formation of methyl-coenzyme M and tetrahydromethanopterin from coenzyme M and methyl-tetrahydromethanopterin. This is an energy-conserving, sodium-ion translocating step. This Methanocaldococcus jannaschii (strain ATCC 43067 / DSM 2661 / JAL-1 / JCM 10045 / NBRC 100440) (Methanococcus jannaschii) protein is Tetrahydromethanopterin S-methyltransferase subunit A.